The chain runs to 157 residues: Ribosomal RNA large subunit methyltransferase H (157 aa).

S-adenosyl-L-methionine contacts are provided by residues Leu-73, Gly-105, and 124-129 (LSLMTF).

It belongs to the RNA methyltransferase RlmH family. Homodimer.

The protein localises to the cytoplasm. The catalysed reaction is pseudouridine(1915) in 23S rRNA + S-adenosyl-L-methionine = N(3)-methylpseudouridine(1915) in 23S rRNA + S-adenosyl-L-homocysteine + H(+). In terms of biological role, specifically methylates the pseudouridine at position 1915 (m3Psi1915) in 23S rRNA. The chain is Ribosomal RNA large subunit methyltransferase H from Flavobacterium johnsoniae (strain ATCC 17061 / DSM 2064 / JCM 8514 / BCRC 14874 / CCUG 350202 / NBRC 14942 / NCIMB 11054 / UW101) (Cytophaga johnsonae).